The following is a 276-amino-acid chain: Release factor glutamine methyltransferase (276 aa).

S-adenosyl-L-methionine is bound by residues G116–G120, D139, W167, and N182. Residue N182–Y185 participates in substrate binding.

It belongs to the protein N5-glutamine methyltransferase family. PrmC subfamily.

The catalysed reaction is L-glutaminyl-[peptide chain release factor] + S-adenosyl-L-methionine = N(5)-methyl-L-glutaminyl-[peptide chain release factor] + S-adenosyl-L-homocysteine + H(+). Methylates the class 1 translation termination release factors RF1/PrfA and RF2/PrfB on the glutamine residue of the universally conserved GGQ motif. This Pseudomonas aeruginosa (strain ATCC 15692 / DSM 22644 / CIP 104116 / JCM 14847 / LMG 12228 / 1C / PRS 101 / PAO1) protein is Release factor glutamine methyltransferase.